Consider the following 969-residue polypeptide: MDITVNSQSNTVAPKQAECKKMRYSIRKVATVGATSALVGTLAFLGATQVKADQVTETAPAVATATATPETSTASLTVASETATSVATSEAVESSVAHSEVATKPVTETQPSNTTPSVVEEKASSTVVTSSSDATTPSATVAAVSAPAHTSEAAVEAPTSTASSEAADTHTEVDLKVSENSAANANLSKLNGRIKSIVEENMTSDQIVALTEEEIKALNKVDFSDDAIKGTGTSLTYRNLKDIVASFLKQDSKLAVPYFKADTIINMPAFNTVDAQTMKKEEIDVWDSWPVQDAKSGVVSNWNGYQLVISMAGAPNKNSNHIYLLYRKYGDNDFTHWKNAGPIFGYNALEDDQQWSGSATVNSDGSIQLYYTKNDTSGGKLNWQQLASATLNLAVENDEVVIKSVENDHILFGGDNYHYQSYPKFMSTFDDDHNHDGNPDRTDNYCLRDPHIIEDNGSRYLIFESNTGDENYQGEKQIYKWSNYGGDDAFNLKSFLNIVNNKHLYNLASWANGSIGILKLDDNEKNPSVAELYTPLVTSHMVTDEVERPSVVKMGGKYYLFTASRINKSTDAEGTVAAREAVGDDVVMLGFVSDSLRGKYRPLNGSGVVLTASVPADWRTSTYSYYAVPVEGSSDTLLVTSYMTNRGGIAGAENKSTWAPSFLIKMNADDTTEVLPKMTNQGDWIWDKSSESLVHVGDQNSAKLPNEDFNVDYYAVSGYGLKPHTYPTVDGSTGVSEAHGVLTVTVKDGKDKKADKPETPVSPTEGNHSVDDKTNKPGTSKPADNNQPSADKEDKPTNPTNPDSPARTPFPYYGDHSNDNNSSNDHHVAVPVKPSTGDSVGDRRPVAQAAEIATPVPKTIVATGPTVPTNTVKEESVTETEAPKPVKSEEKVQSHGVDKANEVTKSDESSKGNNTKVAAKLATTPKTPSDSEGSNSNILSILATIFAAIASLALLGYGLVTGKIHLPKK.

An N-terminal signal peptide occupies residues 1–52; sequence MDITVNSQSNTVAPKQAECKKMRYSIRKVATVGATSALVGTLAFLGATQVKA. Over residues 89 to 103 the composition is skewed to low complexity; that stretch reads SEAVESSVAHSEVAT. The segment at 89–169 is disordered; the sequence is SEAVESSVAH…STASSEAADT (81 aa). Residues 106-116 show a composition bias toward polar residues; sequence VTETQPSNTTP. Residues 124–166 are compositionally biased toward low complexity; that stretch reads SSTVVTSSSDATTPSATVAAVSAPAHTSEAAVEAPTSTASSEA. Trp-286, Asp-287, and Ser-356 together coordinate sucrose. Asp-287 acts as the Nucleophile in catalysis. Asp-443 is a Ca(2+) binding site. Positions 448 and 449 each coordinate sucrose. 3 residues coordinate Ca(2+): Gln-473, Asn-512, and Asp-544. Glu-545 contributes to the sucrose binding site. The Proton donor/acceptor role is filled by Glu-547. Arg-565 lines the sucrose pocket. Disordered regions lie at residues 746-843 and 860-934; these read VKDG…VGDR and IVAT…SEGS. A compositionally biased stretch (basic and acidic residues) spans 747–758; it reads KDGKDKKADKPE. Polar residues predominate over residues 776 to 789; it reads KPGTSKPADNNQPS. Basic and acidic residues predominate over residues 872–910; the sequence is VKEESVTETEAPKPVKSEEKVQSHGVDKANEVTKSDESS. Residues 924 to 934 show a composition bias toward polar residues; the sequence is TPKTPSDSEGS. The chain crosses the membrane as a helical span at residues 938–958; sequence ILSILATIFAAIASLALLGYG.

This sequence belongs to the glycosyl hydrolase 68 family.

The protein localises to the cell membrane. It is found in the cell surface. The enzyme catalyses [6)-beta-D-fructofuranosyl-(2-&gt;](n) alpha-D-glucopyranoside + sucrose = [6)-beta-D-fructofuranosyl-(2-&gt;](n+1) alpha-D-glucopyranoside + D-glucose. Its activity is regulated as follows. Ca(2+) may play an important structural role and promote stability of levansucrase. Its function is as follows. Catalyzes the synthesis of levan, a fructose polymer, by transferring the fructosyl moiety from sucrose to a growing acceptor molecule. Also displays sucrose hydrolase activity. The sequence is that of Levansucrase from Streptococcus salivarius.